The primary structure comprises 149 residues: Alpha-amylase/trypsin inhibitor CMb (149 aa).

The signal sequence occupies residues 1 to 24 (MASKSSCDLLLAAVLVSIFAAVAA). Asparagine 124 carries N-linked (GlcNAc...) asparagine glycosylation.

Belongs to the protease inhibitor I6 (cereal trypsin/alpha-amylase inhibitor) family. Heterotetramer of one CMa, one CMb and two CMd chains. In terms of processing, five disulfide bonds, which are essential for the inhibitor activity, are probably present. Post-translationally, exists both in a glycosylated and in an unglycosylated form. The glycosylated form is a potent allergen. As to expression, endosperm.

Its subcellular location is the secreted. In terms of biological role, part of a complex with inhibitory activity, but CMb is inactive as a separate subunit. The protein is Alpha-amylase/trypsin inhibitor CMb (IAT2) of Hordeum vulgare (Barley).